A 71-amino-acid chain; its full sequence is Large ribosomal subunit protein bL31 (71 aa).

The Zn(2+) site is built by C16, C18, C37, and C40.

This sequence belongs to the bacterial ribosomal protein bL31 family. Type A subfamily. Part of the 50S ribosomal subunit. Zn(2+) is required as a cofactor.

In terms of biological role, binds the 23S rRNA. The sequence is that of Large ribosomal subunit protein bL31 from Pseudomonas putida (strain GB-1).